We begin with the raw amino-acid sequence, 308 residues long: Oligopeptide transport ATP-binding protein AmiF (308 aa).

The region spanning 6 to 251 is the ABC transporter domain; that stretch reads VEIKDLEISF…PIHPYTQALL (246 aa). An ATP-binding site is contributed by 42-49; that stretch reads GESGSGKT.

This sequence belongs to the ABC transporter superfamily.

The protein localises to the cell membrane. Its function is as follows. Part of the binding-protein-dependent transport system for oligopeptides. Probably responsible for energy coupling to the transport system. This is Oligopeptide transport ATP-binding protein AmiF (amiF) from Streptococcus pneumoniae serotype 4 (strain ATCC BAA-334 / TIGR4).